The primary structure comprises 455 residues: Fumarate hydratase class II (455 aa).

Residues 96–98, 122–125, 132–134, and T180 each bind substrate; these read SGT, HPND, and SSN. H181 (proton donor/acceptor) is an active-site residue. The active site involves S311. Residues S312 and 317-319 each bind substrate; that span reads KVN.

The protein belongs to the class-II fumarase/aspartase family. Fumarase subfamily. Homotetramer.

It is found in the cytoplasm. The catalysed reaction is (S)-malate = fumarate + H2O. It participates in carbohydrate metabolism; tricarboxylic acid cycle; (S)-malate from fumarate: step 1/1. In terms of biological role, involved in the TCA cycle. Catalyzes the stereospecific interconversion of fumarate to L-malate. The sequence is that of Fumarate hydratase class II from Listeria monocytogenes serotype 4b (strain F2365).